Reading from the N-terminus, the 201-residue chain is Dephospho-CoA kinase (201 aa).

The DPCK domain occupies 4 to 201; sequence VIGLTGGIAS…LLDTWSNIEK (198 aa). 12–17 provides a ligand contact to ATP; that stretch reads ASGKST.

Belongs to the CoaE family.

It is found in the cytoplasm. It carries out the reaction 3'-dephospho-CoA + ATP = ADP + CoA + H(+). Its pathway is cofactor biosynthesis; coenzyme A biosynthesis; CoA from (R)-pantothenate: step 5/5. In terms of biological role, catalyzes the phosphorylation of the 3'-hydroxyl group of dephosphocoenzyme A to form coenzyme A. This Bacillus licheniformis (strain ATCC 14580 / DSM 13 / JCM 2505 / CCUG 7422 / NBRC 12200 / NCIMB 9375 / NCTC 10341 / NRRL NRS-1264 / Gibson 46) protein is Dephospho-CoA kinase.